Consider the following 173-residue polypeptide: SPbeta prophage-derived putative HNH homing endonuclease YosQ (173 aa).

In terms of biological role, a possible homing endonuclease, it is entirely encoded within the YosP intron. This is SPbeta prophage-derived putative HNH homing endonuclease YosQ (yosQ) from Bacillus subtilis (strain 168).